Reading from the N-terminus, the 254-residue chain is 5-oxoprolinase subunit A (254 aa).

This sequence belongs to the LamB/PxpA family. Forms a complex composed of PxpA, PxpB and PxpC.

The enzyme catalyses 5-oxo-L-proline + ATP + 2 H2O = L-glutamate + ADP + phosphate + H(+). In terms of biological role, catalyzes the cleavage of 5-oxoproline to form L-glutamate coupled to the hydrolysis of ATP to ADP and inorganic phosphate. The protein is 5-oxoprolinase subunit A of Burkholderia vietnamiensis (strain G4 / LMG 22486) (Burkholderia cepacia (strain R1808)).